Here is a 192-residue protein sequence, read N- to C-terminus: Mitochondrial import inner membrane translocase subunit Tim22 (192 aa).

2 disulfide bridges follow: Cys-67–Cys-139 and Cys-158–Cys-177. Helical transmembrane passes span 72 to 92, 123 to 141, and 168 to 188; these read VLAC…TAGI, YAKN…ECLV, and AGVK…AAID.

The protein belongs to the Tim17/Tim22/Tim23 family. As to quaternary structure, component of the TIM22 complex, whose core is composed of TIMM22, associated with peripheral protein FXC1/TIMM10B and the 70 kDa heterohexamer. In most cases, the 70 kDa complex is composed of TIMM9 and TIMM10 (TIMM10A or TIMM10B). A small fraction of the 70 kDa complex is composed of TIMM8 (TIMM8A/DDP1 or TIMM8B/DDP2) and TIMM13. The TIM22 complex also contains AGK and TIMM29. Interacts directly with TIMM9, TIMM10A and FXC1/TIMM10B. Interacts (when oxidized) with TIMM29; interaction is direct. In terms of processing, disulfide bonds promote efficient assembly of the TIM22 complex.

Its subcellular location is the mitochondrion inner membrane. Essential core component of the TIM22 complex, a complex that mediates the import and insertion of multi-pass transmembrane proteins into the mitochondrial inner membrane. In the TIM22 complex, it constitutes the voltage-activated and signal-gated channel. Forms a twin-pore translocase that uses the membrane potential as external driving force in 2 voltage-dependent steps. In Rattus norvegicus (Rat), this protein is Mitochondrial import inner membrane translocase subunit Tim22 (Timm22).